A 130-amino-acid chain; its full sequence is Small ribosomal subunit protein uS9 (130 aa).

It belongs to the universal ribosomal protein uS9 family.

The protein is Small ribosomal subunit protein uS9 of Brevibacillus brevis (strain 47 / JCM 6285 / NBRC 100599).